The primary structure comprises 206 residues: dITP/XTP pyrophosphatase (206 aa).

7–12 contacts substrate; that stretch reads SSHGYK. D70 (proton acceptor) is an active-site residue. D70 contacts Mg(2+). Substrate is bound by residues T71, 154–157, K177, and 182–183; these read FGYD and HR.

This sequence belongs to the HAM1 NTPase family. As to quaternary structure, homodimer. Mg(2+) serves as cofactor.

The catalysed reaction is XTP + H2O = XMP + diphosphate + H(+). It carries out the reaction dITP + H2O = dIMP + diphosphate + H(+). It catalyses the reaction ITP + H2O = IMP + diphosphate + H(+). Pyrophosphatase that catalyzes the hydrolysis of nucleoside triphosphates to their monophosphate derivatives, with a high preference for the non-canonical purine nucleotides XTP (xanthosine triphosphate), dITP (deoxyinosine triphosphate) and ITP. Seems to function as a house-cleaning enzyme that removes non-canonical purine nucleotides from the nucleotide pool, thus preventing their incorporation into DNA/RNA and avoiding chromosomal lesions. The sequence is that of dITP/XTP pyrophosphatase from Chlamydia pneumoniae (Chlamydophila pneumoniae).